The chain runs to 196 residues: Probable malonic semialdehyde reductase RutE (196 aa).

Belongs to the nitroreductase family. HadB/RutE subfamily. Requires FMN as cofactor.

It catalyses the reaction 3-hydroxypropanoate + NADP(+) = 3-oxopropanoate + NADPH + H(+). May reduce toxic product malonic semialdehyde to 3-hydroxypropionic acid, which is excreted. The sequence is that of Probable malonic semialdehyde reductase RutE from Escherichia coli O139:H28 (strain E24377A / ETEC).